We begin with the raw amino-acid sequence, 536 residues long: Cytochrome P450 monooxygenase phqM (536 aa).

Residue Cys-464 participates in heme binding.

This sequence belongs to the cytochrome P450 family. Heme is required as a cofactor.

The protein operates within alkaloid biosynthesis. Its function is as follows. Cytochrome P450 monooxygenase; part of the gene cluster that mediates the biosynthesis of paraherquamide, a fungal indole alkaloid that belongs to a family of natural products containing a characteristic bicyclo[2.2.2]diazaoctane core. The first steps in the biosynthesis of paraherquamide is the production of the beta-methyl-proline precursor from L-isoleucine. They require oxidation of a terminally hydroxylated L-isoleucine to the corresponding aldehyde by enzymes which have still to be identified. Spontaneous cyclization and dehydration would yield the 4-methyl pyrolline-5-carboxylic acid, which is then reduced by the pyrroline-5-carboxylate reductase phqD leading to the beta-methyl-proline precursor. The next step of paraherquamide biosynthesis involves coupling of beta-methyl-proline and L-tryptophan by the bimodular NRPS phqB, to produce a monooxopiperazine intermediate. The reductase (R) domain of phqB utilizes NADPH for hydride transfer to reduce the thioester bond of the T domain-tethered linear dipeptide to a hemithioaminal intermediate, which spontaneously cleaves the C-S bond to release the aldehyde product. This compound undergoes spontaneous cyclization and dehydration to give a dienamine which is reverse prenylated at C-2 by the reverse prenyltransferase phqJ. The other prenyltransferase present in the cluster, phqI may be a redundant gene in the pathway. During biosynthetic assembly, the key step to produce the polycyclic core is catalyzed by the bifunctional reductase and intramolecular [4+2] Diels-Alderase, phqE, resulting in formation of the [2.2.2] diazaoctane intermediate preparaherquamide. Following formation of preparaherquamide, an indole 2,3-epoxidation-initiated pinacol-like rearrangement is catalyzed by the phqK FAD-dependent monooxygenase. The prenyltransferase phqA, the cytochrome P450 monooxygenase phqL, and the FAD-linked oxidoreductase phqH (or the cytochrome P450 monooxygenase phqM), are proposed to be involved in the formation of the pyran ring. The FAD-dependent monooxygenase phqK is likely responsible for generation of the spiro-oxindole, and the N-methylation is likely mediated by the phqN methyltransferase leading to the isolable natural product paraherquamide F. However, the order of these biosynthetic steps has still to be determined. In late-stage paraherquamide biosynthesis, the third P450 monooxygenase, phqO, is probably responsible for the C-14 hydroxylation, transforming paraherquamide F to paraherquamide G, and paraherquamide E to the final product paraherquamide A. The expansion from the 6-membered ring pyran (in paraherquamides F and G) to the 7-membered dioxepin ring (in paraherquamides A and E) represents a poorly understood but intriguing process that probably involves the 2-oxoglutarate-dependent dioxygenase phqC. Finally, the remaining members of the paraherquamide cluster, including phqI as well as phqM (or phqH), do not have a clearly prescribed role and appear to be redundant. The polypeptide is Cytochrome P450 monooxygenase phqM (Penicillium fellutanum).